The primary structure comprises 309 residues: MNRLQVELPGLSLKNPIIPASGCFGFGREYAQFYDLSVLGSIMIKATTEQPRYGNPTPRVAETPGGMLNAIGLQNPGLDKVMNSELPWLEQFDLPIIANVAGSQAEDYVAVAKEISKAPNVHALELNISCPNVKTGGIAFGTNPEIAADLTKRVKEVSEVPVYVKLSPNVANIVEIAKAIENAGADGLTMINTLLGMRLDLKTAKPILANRTGGLSGPAIKPVAIRMVHEVSQAVNIPIIGMGGIETAEDVIEFFYAGASAVAVGTANFIDPFVCPTIIEELPALLDELGFDHISECQGRSWKQTCHSR.

FMN is bound by residues S21 and 45–46 (KA). Substrate is bound by residues K45 and 69-73 (NAIGL). Residues N99 and N127 each coordinate FMN. Residue N127 coordinates substrate. C130 acts as the Nucleophile in catalysis. FMN-binding residues include K165 and I191. Position 192 to 193 (192 to 193 (NT)) interacts with substrate. FMN-binding positions include G217, 243–244 (GG), and 265–266 (GT).

It belongs to the dihydroorotate dehydrogenase family. Type 1 subfamily. In terms of assembly, heterotetramer of 2 PyrK and 2 PyrD type B subunits. FMN is required as a cofactor.

The protein resides in the cytoplasm. The enzyme catalyses (S)-dihydroorotate + NAD(+) = orotate + NADH + H(+). It functions in the pathway pyrimidine metabolism; UMP biosynthesis via de novo pathway; orotate from (S)-dihydroorotate (NAD(+) route): step 1/1. Catalyzes the conversion of dihydroorotate to orotate with NAD(+) as electron acceptor. The sequence is that of Dihydroorotate dehydrogenase B (NAD(+)), catalytic subunit (pyrD) from Bacillus cereus (strain ATCC 14579 / DSM 31 / CCUG 7414 / JCM 2152 / NBRC 15305 / NCIMB 9373 / NCTC 2599 / NRRL B-3711).